We begin with the raw amino-acid sequence, 1300 residues long: Nephrocystin-3 (1300 aa).

The stretch at 82–183 (KNNEVASMQK…LQRLQAQGIQ (102 aa)) forms a coiled coil. 9 TPR repeats span residues 443 to 476 (TMED…ICEL), 916 to 949 (ADLY…RETA), 958 to 991 (AQSL…SENA), 1000 to 1033 (AREL…RQKS), 1066 to 1099 (ARTL…RERV), 1108 to 1141 (AQSI…RRRA), 1150 to 1183 (AYTV…RQKS), 1192 to 1225 (ATAL…YEDS), and 1234 to 1267 (GETL…KETE). A disordered region spans residues 1268–1288 (TSVLGAKAPSGHSSSGGDTYS). Residues 1278–1288 (GHSSSGGDTYS) are compositionally biased toward polar residues.

It is found in the cell projection. Its subcellular location is the cilium. In terms of biological role, required for normal ciliary development and function. Inhibits disheveled-1-induced canonical Wnt-signaling activity and may also play a role in the control of non-canonical Wnt signaling that regulates planar cell polarity. Probably acts as a molecular switch between different Wnt signaling pathways. Required for proper convergent extension cell movements. The polypeptide is Nephrocystin-3 (nphp3) (Xenopus laevis (African clawed frog)).